Reading from the N-terminus, the 384-residue chain is Zinc transporter 7 (384 aa).

A signal peptide spans 1–25; that stretch reads MERFVQFLRRGNGLMAASLAAGSCA. Topologically, residues 26 to 46 are extracellular; sequence EEVAKAEGAGCRDDAAALRLK. The chain crosses the membrane as a helical span at residues 47–67; it reads GVAMATILVAGVVGVGLPLAG. The Cytoplasmic portion of the chain corresponds to 68–79; that stretch reads RKRRALRTDSAA. Residues 80-100 traverse the membrane as a helical segment; sequence FVAAKAFAAGVILATGFVHML. Residues 101–119 lie on the Extracellular side of the membrane; that stretch reads HDAEHALSSPCLPAHPWRS. A helical transmembrane segment spans residues 120–140; that stretch reads FPFPGFVAMSAALATLVLDFL. Topologically, residues 141 to 227 are cytoplasmic; that stretch reads ATRFYEGKHR…GEGEVPAQVR (87 aa). Positions 185 to 222 are disordered; sequence DNKAPLLQPHSHSHSHPHGHGHGHELAQPEGSGGEGEV. Residues 195–205 are compositionally biased toward basic residues; it reads SHSHSHPHGHG. Residues 228 to 248 traverse the membrane as a helical segment; sequence SVVVSQILEMGIVSHSVIIGL. Residues 249 to 261 lie on the Extracellular side of the membrane; that stretch reads SLGVSRSPCTIRP. The chain crosses the membrane as a helical span at residues 262–282; it reads LVAALSFHQFFEGFALGGCIA. The Cytoplasmic segment spans residues 283–291; that stretch reads QAQFKTLSA. Residues 292-312 traverse the membrane as a helical segment; sequence AIMACFFAITTPAGIAAGAGV. At 313–323 the chain is on the extracellular side; sequence ASFYNANSPRA. The chain crosses the membrane as a helical span at residues 324–344; sequence LVVEGILDSVSAGILIYMSLV. The Cytoplasmic portion of the chain corresponds to 345–363; sequence DLIAADFLGGKMTGSTRQQ. Residues 364 to 384 traverse the membrane as a helical segment; sequence VMAYIALFLGALSMSSLAIWA.

This sequence belongs to the ZIP transporter (TC 2.A.5) family.

Its subcellular location is the cell membrane. Its function is as follows. Zinc transporter that may be involved in zinc uptake from the rhizosphere. The chain is Zinc transporter 7 (ZIP7) from Oryza sativa subsp. japonica (Rice).